Here is a 318-residue protein sequence, read N- to C-terminus: tRNA-modifying protein YgfZ (318 aa).

Folate is bound by residues Trp-24 and Trp-185.

The protein belongs to the tRNA-modifying YgfZ family.

It is found in the cytoplasm. In terms of biological role, folate-binding protein involved in regulating the level of ATP-DnaA and in the modification of some tRNAs. It is probably a key factor in regulatory networks that act via tRNA modification, such as initiation of chromosomal replication. In Buchnera aphidicola subsp. Baizongia pistaciae (strain Bp), this protein is tRNA-modifying protein YgfZ.